The following is a 410-amino-acid chain: Arginine deiminase (410 aa).

The Amidino-cysteine intermediate role is filled by cysteine 400.

The protein belongs to the arginine deiminase family.

The protein resides in the cytoplasm. It carries out the reaction L-arginine + H2O = L-citrulline + NH4(+). Its pathway is amino-acid degradation; L-arginine degradation via ADI pathway; carbamoyl phosphate from L-arginine: step 1/2. In Bacillus cytotoxicus (strain DSM 22905 / CIP 110041 / 391-98 / NVH 391-98), this protein is Arginine deiminase.